The primary structure comprises 135 residues: MLSPKRTRFRKQHRGRMKGISYRGNRICFGRYALQALEPAWITSRQIEAGRRAMTRNARRGGKIWVRIFPDKPVTVRPAETRMGSGKGSPEYWVAVVKPGRILYEISGVAENIARRAVAIAASKMPIRTQFIISG.

Residue methionine 1 is modified to N-methylmethionine.

As to quaternary structure, component of the chloroplast large ribosomal subunit (LSU). Mature 70S chloroplast ribosomes of higher plants consist of a small (30S) and a large (50S) subunit. The 30S small subunit contains 1 molecule of ribosomal RNA (16S rRNA) and 24 different proteins. The 50S large subunit contains 3 rRNA molecules (23S, 5S and 4.5S rRNA) and 33 different proteins. Post-translationally, partially alpha-N-monomethylated at Met-1 (10%), whereas 90% of it is blocked to Edman degradation, probably by trimethylation.

The protein localises to the plastid. It localises to the chloroplast. In terms of biological role, component of the chloroplast ribosome (chloro-ribosome), a dedicated translation machinery responsible for the synthesis of chloroplast genome-encoded proteins, including proteins of the transcription and translation machinery and components of the photosynthetic apparatus. In Spinacia oleracea (Spinach), this protein is Large ribosomal subunit protein uL16c.